Reading from the N-terminus, the 181-residue chain is GTP cyclohydrolase 1 2 (181 aa).

Belongs to the GTP cyclohydrolase I family. As to quaternary structure, homomer.

The enzyme catalyses GTP + H2O = 7,8-dihydroneopterin 3'-triphosphate + formate + H(+). Its pathway is cofactor biosynthesis; 7,8-dihydroneopterin triphosphate biosynthesis; 7,8-dihydroneopterin triphosphate from GTP: step 1/1. The polypeptide is GTP cyclohydrolase 1 2 (Pseudomonas syringae pv. tomato (strain ATCC BAA-871 / DC3000)).